The primary structure comprises 465 residues: GTPase Der (465 aa).

EngA-type G domains follow at residues 3-167 (PLVA…PEEG) and 179-352 (VRIA…ASAT). GTP contacts are provided by residues 9-16 (GRPNVGKS), 57-61 (DTGGI), 119-122 (NKID), 185-192 (GRPNVGKS), 232-236 (DTAGL), and 297-300 (NKWD). The 85-residue stretch at 353-437 (HEFSTSEVNQ…PVRFIFREGA (85 aa)) folds into the KH-like domain.

The protein belongs to the TRAFAC class TrmE-Era-EngA-EngB-Septin-like GTPase superfamily. EngA (Der) GTPase family. As to quaternary structure, associates with the 50S ribosomal subunit.

GTPase that plays an essential role in the late steps of ribosome biogenesis. This chain is GTPase Der, found in Xanthomonas campestris pv. campestris (strain 8004).